The sequence spans 704 residues: Elongation factor G (704 aa).

The region spanning 10–290 is the tr-type G domain; it reads NKVRNIGIMA…AVVDFLPNPL (281 aa). GTP-binding positions include 19–26, 83–87, and 137–140; these read AHIDAGKT, DTPGH, and NKMD.

It belongs to the TRAFAC class translation factor GTPase superfamily. Classic translation factor GTPase family. EF-G/EF-2 subfamily.

Its subcellular location is the cytoplasm. Functionally, catalyzes the GTP-dependent ribosomal translocation step during translation elongation. During this step, the ribosome changes from the pre-translocational (PRE) to the post-translocational (POST) state as the newly formed A-site-bound peptidyl-tRNA and P-site-bound deacylated tRNA move to the P and E sites, respectively. Catalyzes the coordinated movement of the two tRNA molecules, the mRNA and conformational changes in the ribosome. The polypeptide is Elongation factor G (Paenarthrobacter aurescens (strain TC1)).